We begin with the raw amino-acid sequence, 344 residues long: MSLTLEDFDYDLPHELIAQTPIKKRDSSRLLELDRQTGEMQDKHFYDIIDQLNPGDAVVMNNSRVMPARLYGVKPETGGHAEVLLLHNTEGDEWETLMKPAKRAKVGTVISFGDGKLTATVTAEKEDGIRMIEFHYDGIFMEILESLGETPLPPYIKEKLDDPDRYQTVYAKENGSAAAPTAGLHWTKELLQKVQDKGIKLVYLTLHVGLGTFRPVEEDNIDDHKMHSEFYRLDEDAAKTLNEVRQNGGRIIATGTTSIRTLETIGSKFDGEIKPDSGWTDIFIKPGYQWKVVDAFITNFHLPKSTLVMLVAAFTGRDMILKAYQHAIDEKYRFFSFGDAMFIH.

The protein belongs to the QueA family. In terms of assembly, monomer.

Its subcellular location is the cytoplasm. It catalyses the reaction 7-aminomethyl-7-carbaguanosine(34) in tRNA + S-adenosyl-L-methionine = epoxyqueuosine(34) in tRNA + adenine + L-methionine + 2 H(+). Its pathway is tRNA modification; tRNA-queuosine biosynthesis. Its function is as follows. Transfers and isomerizes the ribose moiety from AdoMet to the 7-aminomethyl group of 7-deazaguanine (preQ1-tRNA) to give epoxyqueuosine (oQ-tRNA). The chain is S-adenosylmethionine:tRNA ribosyltransferase-isomerase from Lactiplantibacillus plantarum (strain ATCC BAA-793 / NCIMB 8826 / WCFS1) (Lactobacillus plantarum).